Consider the following 557-residue polypeptide: Laccase-11 (557 aa).

The signal sequence occupies residues methionine 1 to alanine 23. 2 consecutive Plastocyanin-like domains span residues aspartate 31–glycine 147 and glutamate 158–valine 308. 3 N-linked (GlcNAc...) asparagine glycosylation sites follow: asparagine 36, asparagine 69, and asparagine 77. 2 residues coordinate Cu cation: histidine 81 and histidine 83. Asparagine 115 is a glycosylation site (N-linked (GlcNAc...) asparagine). Cu cation contacts are provided by histidine 126 and histidine 128. 8 N-linked (GlcNAc...) asparagine glycosylation sites follow: asparagine 240, asparagine 296, asparagine 323, asparagine 371, asparagine 381, asparagine 398, asparagine 416, and asparagine 440. The Plastocyanin-like 3 domain maps to aspartate 406–glutamate 541. Residues histidine 458, histidine 461, histidine 463, histidine 520, cysteine 521, histidine 522, and histidine 526 each coordinate Cu cation.

This sequence belongs to the multicopper oxidase family. It depends on Cu cation as a cofactor. In terms of tissue distribution, ubiquitous and constitutive.

It localises to the secreted. Its subcellular location is the extracellular space. The protein localises to the apoplast. It catalyses the reaction 4 hydroquinone + O2 = 4 benzosemiquinone + 2 H2O. Its function is as follows. Lignin degradation and detoxification of lignin-derived products. This chain is Laccase-11 (LAC11), found in Arabidopsis thaliana (Mouse-ear cress).